Reading from the N-terminus, the 458-residue chain is ATP synthase subunit beta (458 aa).

G148–T155 contacts ATP.

It belongs to the ATPase alpha/beta chains family. In terms of assembly, F-type ATPases have 2 components, CF(1) - the catalytic core - and CF(0) - the membrane proton channel. CF(1) has five subunits: alpha(3), beta(3), gamma(1), delta(1), epsilon(1). CF(0) has three main subunits: a(1), b(2) and c(9-12). The alpha and beta chains form an alternating ring which encloses part of the gamma chain. CF(1) is attached to CF(0) by a central stalk formed by the gamma and epsilon chains, while a peripheral stalk is formed by the delta and b chains.

The protein resides in the cell inner membrane. The catalysed reaction is ATP + H2O + 4 H(+)(in) = ADP + phosphate + 5 H(+)(out). Its function is as follows. Produces ATP from ADP in the presence of a proton gradient across the membrane. The catalytic sites are hosted primarily by the beta subunits. This is ATP synthase subunit beta from Actinobacillus succinogenes (strain ATCC 55618 / DSM 22257 / CCUG 43843 / 130Z).